The chain runs to 356 residues: Fructose import permease protein FruF (356 aa).

7 helical membrane-spanning segments follow: residues 25 to 45, 77 to 97, 113 to 133, 180 to 200, 231 to 251, 268 to 290, and 308 to 328; these read IVAFILLVIICTIFQHDFLAL, LVISTAGIDLSVGSVMAVAGA, ILIALAVGLAIGCVNGALVSF, FILGIPANFVIAVIIVILVGL, ILFLVYAISGFLAAIAGLFAT, MYAILAVVIGGTSLLGGKFSLAG, and LGVNAEATPAFFAVVVIVICV.

The protein belongs to the binding-protein-dependent transport system permease family. In terms of assembly, the complex is composed of an ATP-binding protein (FruK), two transmembrane proteins (FruF and FruG) and a solute-binding protein (FruE).

The protein resides in the cell membrane. Functionally, part of the high-affinity ABC transporter complex FruEKFG involved in fructose uptake. Can also transport ribose and xylose, with lower affinity. Probably responsible for the translocation of the substrate across the membrane. This Bifidobacterium longum (strain NCC 2705) protein is Fructose import permease protein FruF.